The chain runs to 503 residues: Maturase K (503 aa).

This sequence belongs to the intron maturase 2 family. MatK subfamily.

It localises to the plastid. It is found in the chloroplast. In terms of biological role, usually encoded in the trnK tRNA gene intron. Probably assists in splicing its own and other chloroplast group II introns. The protein is Maturase K of Liquidambar styraciflua (Sweetgum tree).